The primary structure comprises 377 residues: MKHNIINLAQDLIRRPSVSPDDQGCQQVIAERLAQLGFTLEWLPFGDTLNLWATHGTQDPCVVFAGHTDVVPVGDETQWQYPPFSAEIVDGTLYGRGAADMKGSLAALVIAAETFVKNNPNHKGKIALLITSDEEAAAKAGTVKVVETLMARQEAVHYAVVGEPSSGKVLGDVIKNGRRGSITGELYIEGVQGHVAYPHLAENPVHTSLNFLTELTTYQWDNGNEFFPPTSLQIANIKAGTGSNNVIPGELYVQFNLRYCTEVTDEIIKNKVAEMLAKHQLKHRISWNLSGQPFLAGNGELVKATVQAVENVTKITPRLDTSGGTSDGRFIALMGAEVVEFGPLNATIHKVNECVSVEDLGKCGEVYYHILERLLKS.

Residue histidine 67 coordinates Zn(2+). The active site involves aspartate 69. Aspartate 100 lines the Zn(2+) pocket. The Proton acceptor role is filled by glutamate 134. Zn(2+) contacts are provided by glutamate 135, glutamate 163, and histidine 349.

The protein belongs to the peptidase M20A family. DapE subfamily. In terms of assembly, homodimer. Zn(2+) is required as a cofactor. The cofactor is Co(2+).

The catalysed reaction is N-succinyl-(2S,6S)-2,6-diaminopimelate + H2O = (2S,6S)-2,6-diaminopimelate + succinate. It functions in the pathway amino-acid biosynthesis; L-lysine biosynthesis via DAP pathway; LL-2,6-diaminopimelate from (S)-tetrahydrodipicolinate (succinylase route): step 3/3. Catalyzes the hydrolysis of N-succinyl-L,L-diaminopimelic acid (SDAP), forming succinate and LL-2,6-diaminopimelate (DAP), an intermediate involved in the bacterial biosynthesis of lysine and meso-diaminopimelic acid, an essential component of bacterial cell walls. The sequence is that of Succinyl-diaminopimelate desuccinylase from Actinobacillus pleuropneumoniae serotype 5b (strain L20).